Here is a 149-residue protein sequence, read N- to C-terminus: Putative pre-16S rRNA nuclease (149 aa).

It belongs to the YqgF nuclease family.

It localises to the cytoplasm. In terms of biological role, could be a nuclease involved in processing of the 5'-end of pre-16S rRNA. In Synechococcus sp. (strain ATCC 27144 / PCC 6301 / SAUG 1402/1) (Anacystis nidulans), this protein is Putative pre-16S rRNA nuclease.